We begin with the raw amino-acid sequence, 112 residues long: Large ribosomal subunit protein eL34A (112 aa).

Belongs to the eukaryotic ribosomal protein eL34 family. Component of the large ribosomal subunit (LSU). Mature yeast ribosomes consist of a small (40S) and a large (60S) subunit. The 40S small subunit contains 1 molecule of ribosomal RNA (18S rRNA) and at least 33 different proteins. The large 60S subunit contains 3 rRNA molecules (25S, 5.8S and 5S rRNA) and at least 46 different proteins.

It is found in the cytoplasm. In terms of biological role, component of the ribosome, a large ribonucleoprotein complex responsible for the synthesis of proteins in the cell. The small ribosomal subunit (SSU) binds messenger RNAs (mRNAs) and translates the encoded message by selecting cognate aminoacyl-transfer RNA (tRNA) molecules. The large subunit (LSU) contains the ribosomal catalytic site termed the peptidyl transferase center (PTC), which catalyzes the formation of peptide bonds, thereby polymerizing the amino acids delivered by tRNAs into a polypeptide chain. The nascent polypeptides leave the ribosome through a tunnel in the LSU and interact with protein factors that function in enzymatic processing, targeting, and the membrane insertion of nascent chains at the exit of the ribosomal tunnel. This chain is Large ribosomal subunit protein eL34A (rpl3401), found in Schizosaccharomyces pombe (strain 972 / ATCC 24843) (Fission yeast).